We begin with the raw amino-acid sequence, 245 residues long: 1-(5-phosphoribosyl)-5-[(5-phosphoribosylamino)methylideneamino] imidazole-4-carboxamide isomerase (245 aa).

Residue Asp8 is the Proton acceptor of the active site. Asp130 acts as the Proton donor in catalysis.

This sequence belongs to the HisA/HisF family.

The protein resides in the cytoplasm. The catalysed reaction is 1-(5-phospho-beta-D-ribosyl)-5-[(5-phospho-beta-D-ribosylamino)methylideneamino]imidazole-4-carboxamide = 5-[(5-phospho-1-deoxy-D-ribulos-1-ylimino)methylamino]-1-(5-phospho-beta-D-ribosyl)imidazole-4-carboxamide. Its pathway is amino-acid biosynthesis; L-histidine biosynthesis; L-histidine from 5-phospho-alpha-D-ribose 1-diphosphate: step 4/9. This chain is 1-(5-phosphoribosyl)-5-[(5-phosphoribosylamino)methylideneamino] imidazole-4-carboxamide isomerase, found in Marinobacter nauticus (strain ATCC 700491 / DSM 11845 / VT8) (Marinobacter aquaeolei).